Consider the following 341-residue polypeptide: Two-component response regulator ORR30 (341 aa).

Positions 12–127 (RVLVIDDDCS…ELSNIWQHIF (116 aa)) constitute a Response regulatory domain. Asp-63 is modified (4-aspartylphosphate). Positions 195 to 254 (DLGKSRLTWTTQLHRQFIAAVNHLGEDKAVPKKILGIMKVKHLTREQVASHLQKYRMQLK) constitute an HTH myb-type domain. Residues 225 to 250 (PKKILGIMKVKHLTREQVASHLQKYR) constitute a DNA-binding region (H-T-H motif).

Belongs to the ARR family. Type-B subfamily. Post-translationally, two-component system major event consists of a His-to-Asp phosphorelay between a sensor histidine kinase (HK) and a response regulator (RR). In plants, the His-to-Asp phosphorelay involves an additional intermediate named Histidine-containing phosphotransfer protein (HPt). This multistep phosphorelay consists of a His-Asp-His-Asp sequential transfer of a phosphate group between first a His and an Asp of the HK protein, followed by the transfer to a conserved His of the HPt protein and finally the transfer to an Asp in the receiver domain of the RR protein.

It is found in the nucleus. Its function is as follows. Transcriptional activator that acts as a floral inducer to promote short-day (SD) flowering pathway. Activates HD3A and other FT-like genes independently from HD1. May also activate MADS-box transcription factors involved in flowering regulation. Functions as a response regulator involved in His-to-Asp phosphorelay signal transduction system. Phosphorylation of the Asp residue in the receiver domain activates the ability of the protein to promote the transcription of target genes. May directly activate some type-A response regulators in response to cytokinins. This is Two-component response regulator ORR30 from Oryza sativa subsp. japonica (Rice).